The chain runs to 698 residues: tRNA (guanine(37)-N(1))-methyltransferase (698 aa).

The disordered stretch occupies residues 233 to 254 (DSTAHDSVQRNEGKTPKGPLDG). The segment covering 234–247 (STAHDSVQRNEGKT) has biased composition (basic and acidic residues). Residues Arg-394, 432–433 (DI), and 459–460 (DA) each bind S-adenosyl-L-methionine. Disordered stretches follow at residues 500-522 (PDQN…GHVD) and 534-582 (KKKL…DAPR). 3 stretches are compositionally biased toward basic and acidic residues: residues 513 to 522 (RESDRVGHVD), 539 to 550 (HADTNDPLEERP), and 569 to 582 (TNND…DAPR). Asn-603 lines the S-adenosyl-L-methionine pocket.

It belongs to the class I-like SAM-binding methyltransferase superfamily. TRM5/TYW2 family. In terms of assembly, monomer.

It is found in the mitochondrion matrix. The protein localises to the nucleus. Its subcellular location is the cytoplasm. The catalysed reaction is guanosine(37) in tRNA + S-adenosyl-L-methionine = N(1)-methylguanosine(37) in tRNA + S-adenosyl-L-homocysteine + H(+). Functionally, specifically methylates the N1 position of guanosine-37 in various cytoplasmic and mitochondrial tRNAs. Methylation is not dependent on the nature of the nucleoside 5' of the target nucleoside. This is the first step in the biosynthesis of wybutosine (yW), a modified base adjacent to the anticodon of tRNAs and required for accurate decoding. This chain is tRNA (guanine(37)-N(1))-methyltransferase, found in Plasmodium knowlesi (strain H).